Reading from the N-terminus, the 216-residue chain is Octanoyltransferase (216 aa).

The BPL/LPL catalytic domain maps to 32–207 (ENSPDELWLV…TFSQLLGYEH (176 aa)). Substrate-binding positions include 71–78 (RGGQVTYH), 138–140 (SLG), and 151–153 (GLA). C169 serves as the catalytic Acyl-thioester intermediate.

Belongs to the LipB family.

Its subcellular location is the cytoplasm. The enzyme catalyses octanoyl-[ACP] + L-lysyl-[protein] = N(6)-octanoyl-L-lysyl-[protein] + holo-[ACP] + H(+). It participates in protein modification; protein lipoylation via endogenous pathway; protein N(6)-(lipoyl)lysine from octanoyl-[acyl-carrier-protein]: step 1/2. Functionally, catalyzes the transfer of endogenously produced octanoic acid from octanoyl-acyl-carrier-protein onto the lipoyl domains of lipoate-dependent enzymes. Lipoyl-ACP can also act as a substrate although octanoyl-ACP is likely to be the physiological substrate. This chain is Octanoyltransferase, found in Shewanella amazonensis (strain ATCC BAA-1098 / SB2B).